We begin with the raw amino-acid sequence, 343 residues long: N-acetyl-gamma-glutamyl-phosphate reductase (343 aa).

Cysteine 150 is a catalytic residue.

Belongs to the NAGSA dehydrogenase family. Type 1 subfamily.

The protein localises to the cytoplasm. The enzyme catalyses N-acetyl-L-glutamate 5-semialdehyde + phosphate + NADP(+) = N-acetyl-L-glutamyl 5-phosphate + NADPH + H(+). The protein operates within amino-acid biosynthesis; L-arginine biosynthesis; N(2)-acetyl-L-ornithine from L-glutamate: step 3/4. Functionally, catalyzes the NADPH-dependent reduction of N-acetyl-5-glutamyl phosphate to yield N-acetyl-L-glutamate 5-semialdehyde. The sequence is that of N-acetyl-gamma-glutamyl-phosphate reductase from Nitrosococcus oceani (strain ATCC 19707 / BCRC 17464 / JCM 30415 / NCIMB 11848 / C-107).